The primary structure comprises 173 residues: ATP synthase subunit d, mitochondrial (173 aa).

The N-terminal 23 residues, 1 to 23, are a transit peptide targeting the mitochondrion; that stretch reads MAARSAALKIDWVKVTSSLGLRG.

It belongs to the ATPase d subunit family. F-type ATPases have 2 components, CF(1) - the catalytic core - and CF(0) - the membrane proton channel. In yeast, the dimeric form of ATP synthase consists of 17 polypeptides: alpha, beta, gamma, delta, epsilon, 4 (B), 5 (OSCP), 6 (A), 8, 9 (C), d, E (Tim11), f, g, h, i/j and k.

It is found in the mitochondrion inner membrane. In terms of biological role, mitochondrial membrane ATP synthase (F(1)F(0) ATP synthase or Complex V) produces ATP from ADP in the presence of a proton gradient across the membrane which is generated by electron transport complexes of the respiratory chain. F-type ATPases consist of two structural domains, F(1) - containing the extramembraneous catalytic core, and F(0) - containing the membrane proton channel, linked together by a central stalk and a peripheral stalk. During catalysis, ATP synthesis in the catalytic domain of F(1) is coupled via a rotary mechanism of the central stalk subunits to proton translocation. Part of the complex F(0) domain and the peripheric stalk, which acts as a stator to hold the catalytic alpha(3)beta(3) subcomplex and subunit a/ATP6 static relative to the rotary elements. The protein is ATP synthase subunit d, mitochondrial (atp7) of Aspergillus terreus (strain NIH 2624 / FGSC A1156).